A 213-amino-acid polypeptide reads, in one-letter code: Protein GrpE (213 aa).

The segment covering 1–23 (MSDEKKPEAETSESLQKREEKLA) has biased composition (basic and acidic residues). The disordered stretch occupies residues 1 to 43 (MSDEKKPEAETSESLQKREEKLAETLASEPAAQGEAEDAAAAG). The segment covering 29–43 (EPAAQGEAEDAAAAG) has biased composition (low complexity).

This sequence belongs to the GrpE family. In terms of assembly, homodimer.

It localises to the cytoplasm. Its function is as follows. Participates actively in the response to hyperosmotic and heat shock by preventing the aggregation of stress-denatured proteins, in association with DnaK and GrpE. It is the nucleotide exchange factor for DnaK and may function as a thermosensor. Unfolded proteins bind initially to DnaJ; upon interaction with the DnaJ-bound protein, DnaK hydrolyzes its bound ATP, resulting in the formation of a stable complex. GrpE releases ADP from DnaK; ATP binding to DnaK triggers the release of the substrate protein, thus completing the reaction cycle. Several rounds of ATP-dependent interactions between DnaJ, DnaK and GrpE are required for fully efficient folding. The sequence is that of Protein GrpE from Parvibaculum lavamentivorans (strain DS-1 / DSM 13023 / NCIMB 13966).